Consider the following 295-residue polypeptide: Giardin subunit alpha-1 (295 aa).

Annexin repeat units follow at residues 2 to 71 (PKVT…MDLF), 73 to 143 (DRHE…MEKW), 153 to 223 (GSPE…AHFA), and 226 to 293 (GMHR…TLWR).

It belongs to the annexin family. Giardin subunit alpha subfamily.

It localises to the cytoplasm. The protein localises to the cytoskeleton. Its function is as follows. Giardins are involved in parasite attachment to the intestinal mucosa and in the cytoskeletal disassembly and reassembly that marks the transition from infectious trophozoite to transmissible cyst. They may interact with other cytoskeletal proteins such as microtubules in the microribbons or crossbridges, to maintain the integrity of the ventral disk. This chain is Giardin subunit alpha-1, found in Giardia intestinalis (Giardia lamblia).